A 192-amino-acid polypeptide reads, in one-letter code: Transmembrane protein 11, mitochondrial (192 aa).

Residues 1 to 20 (MAAWGRRRLGPGSSGGSARE) are disordered. Transmembrane regions (helical) follow at residues 84–100 (TAVLAGTACLFTPLALP) and 107–124 (ISLPAGVLSLACCTLYGI).

This sequence belongs to the TMEM11 family. Associates with the mitochondrial contact site and cristae organizing system (MICOS) complex, composed of at least MICOS10/MIC10, CHCHD3/MIC19, CHCHD6/MIC25, APOOL/MIC27, IMMT/MIC60, APOO/MIC23/MIC26 and QIL1/MIC13. This complex was also known under the names MINOS or MitOS complex. The MICOS complex associates with mitochondrial outer membrane proteins SAMM50, MTX1, MTX2 and DNAJC11, mitochondrial inner membrane protein TMEM11 and with HSPA9. Interacts with IMMT/MIC60.

It localises to the mitochondrion inner membrane. Functionally, plays a role in mitochondrial morphogenesis. In Homo sapiens (Human), this protein is Transmembrane protein 11, mitochondrial (TMEM11).